Consider the following 396-residue polypeptide: tRNA-specific 2-thiouridylase MnmA (396 aa).

ATP-binding positions include 35 to 42 (GLSGGVDS) and Leu61. Catalysis depends on Cys122, which acts as the Nucleophile. Residues Cys122 and Cys221 are joined by a disulfide bond. Gly147 is a binding site for ATP. Residues 171–173 (KDQ) are interaction with tRNA. Residue Cys221 is the Cysteine persulfide intermediate of the active site. The segment at 326 to 327 (RY) is interaction with tRNA.

Belongs to the MnmA/TRMU family.

The protein localises to the cytoplasm. The enzyme catalyses S-sulfanyl-L-cysteinyl-[protein] + uridine(34) in tRNA + AH2 + ATP = 2-thiouridine(34) in tRNA + L-cysteinyl-[protein] + A + AMP + diphosphate + H(+). Catalyzes the 2-thiolation of uridine at the wobble position (U34) of tRNA, leading to the formation of s(2)U34. The sequence is that of tRNA-specific 2-thiouridylase MnmA from Parasynechococcus marenigrum (strain WH8102).